Here is a 290-residue protein sequence, read N- to C-terminus: Enoyl-CoA hydratase, mitochondrial (290 aa).

The N-terminal 27 residues, 1-27, are a transit peptide targeting the mitochondrion; that stretch reads MAALRALLPRACSSLLSSVRCPELRRF. 98-101 is a substrate binding site; it reads ADIK. An N6-acetyllysine; alternate modification is found at K101. K101 carries the N6-succinyllysine; alternate modification. Phosphoserine is present on S114. An N6-acetyllysine; alternate modification is found at K115. K115 bears the N6-succinyllysine; alternate mark. Residue G141 coordinates substrate. K204 is subject to N6-succinyllysine. K211 carries the N6-acetyllysine modification. K217 bears the N6-acetyllysine; alternate mark. Position 217 is an N6-succinyllysine; alternate (K217).

Belongs to the enoyl-CoA hydratase/isomerase family. In terms of assembly, homohexamer; dimer of trimers. In terms of processing, acetylation of Lys-101 is observed in liver mitochondria from fasted mice but not from fed mice.

The protein localises to the mitochondrion matrix. It carries out the reaction a (3S)-3-hydroxyacyl-CoA = a (2E)-enoyl-CoA + H2O. The catalysed reaction is a (3E)-enoyl-CoA = a 4-saturated (2E)-enoyl-CoA. The enzyme catalyses (3E)-hexenoyl-CoA = (2E)-hexenoyl-CoA. It catalyses the reaction (3S)-3-hydroxybutanoyl-CoA = (2E)-butenoyl-CoA + H2O. It carries out the reaction 3-hydroxyisovaleryl-CoA = 3-methylbut-2-enoyl-CoA + H2O. The catalysed reaction is 3-hydroxypropanoyl-CoA = acryloyl-CoA + H2O. The enzyme catalyses 3-hydroxybutanoyl-CoA = (2E)-butenoyl-CoA + H2O. It catalyses the reaction 2-methylpropenoyl-CoA + H2O = (S)-3-hydroxyisobutanoyl-CoA. It carries out the reaction (3S)-hydroxyhexanoyl-CoA = (2E)-hexenoyl-CoA + H2O. The catalysed reaction is (3S)-hydroxydecanoyl-CoA = (2E)-decenoyl-CoA + H2O. It functions in the pathway lipid metabolism; fatty acid beta-oxidation. In terms of biological role, converts unsaturated trans-2-enoyl-CoA species ((2E)-enoyl-CoA) to the corresponding (3S)-3-hydroxyacyl-CoA species through addition of a water molecule to the double bond. Catalyzes the hydration of medium- and short-chained fatty enoyl-CoA thioesters from 4 carbons long (C4) up to C16. Has high substrate specificity for crotonyl-CoA ((2E)-butenoyl-CoA) and moderate specificity for acryloyl-CoA, 3-methylcrotonyl-CoA (3-methyl-(2E)-butenoyl-CoA) and methacrylyl-CoA ((2E)-2-methylpropenoyl-CoA). Can bind tiglyl-CoA (2-methylcrotonoyl-CoA), but hydrates only a small amount of this substrate. Plays a key role in the beta-oxidation spiral of short- and medium-chain fatty acid oxidation. At a lower rate than the hydratase reaction, catalyzes the isomerase reaction of trans-3-enoyl-CoA species (such as (3E)-hexenoyl-CoA) to trans-2-enoyl-CoA species (such as (2E)-hexenoyl-CoA), which are subsequently hydrated to 3(S)-3-hydroxyacyl-CoA species (such as (3S)-hydroxyhexanoyl-CoA). In Mus musculus (Mouse), this protein is Enoyl-CoA hydratase, mitochondrial.